Consider the following 137-residue polypeptide: Small ribosomal subunit protein uS12 (137 aa).

Residues 1–57 form a disordered region; the sequence is MPTINQLVRKPRKSKVEKSKSPALNVGYNSLKRVPTNESAPQKRGVATRVGTMTPKK. The residue at position 102 (D102) is a 3-methylthioaspartic acid.

It belongs to the universal ribosomal protein uS12 family. In terms of assembly, part of the 30S ribosomal subunit. Contacts proteins S8 and S17. May interact with IF1 in the 30S initiation complex.

Its function is as follows. With S4 and S5 plays an important role in translational accuracy. Functionally, interacts with and stabilizes bases of the 16S rRNA that are involved in tRNA selection in the A site and with the mRNA backbone. Located at the interface of the 30S and 50S subunits, it traverses the body of the 30S subunit contacting proteins on the other side and probably holding the rRNA structure together. The combined cluster of proteins S8, S12 and S17 appears to hold together the shoulder and platform of the 30S subunit. The protein is Small ribosomal subunit protein uS12 of Streptococcus gordonii (strain Challis / ATCC 35105 / BCRC 15272 / CH1 / DL1 / V288).